Consider the following 171-residue polypeptide: Mitochondrial import inner membrane translocase subunit Tim17-A (171 aa).

A disulfide bond links cysteine 9 and cysteine 78. The next 3 membrane-spanning stretches (helical) occupy residues 17-37 (CGGAFTMGTIGGGIFQAFKGF), 63-77 (GGSFAVWGGLFSTID), and 113-133 (VGSAAMGGILLALIEGAGILL). Residues 147-171 (FAEDHSQLPSSQLPSSPFGDYRQYQ) are disordered. Low complexity predominate over residues 153–163 (QLPSSQLPSSP).

It belongs to the Tim17/Tim22/Tim23 family. Component of the TIM23 complex at least composed of TIMM23, TIMM17 (TIMM17A or TIMM17B) and TIMM50. The complex interacts with the TIMM44 component of the PAM complex and with DNAJC15. Degraded by YMEL1 downstream of the integrated stress response (ISR).

It is found in the mitochondrion inner membrane. Functionally, essential component of the TIM23 complex, a complex that mediates the translocation of transit peptide-containing proteins across the mitochondrial inner membrane. This is Mitochondrial import inner membrane translocase subunit Tim17-A (Timm17a) from Rattus norvegicus (Rat).